Consider the following 205-residue polypeptide: Macrophage immunometabolism regulator (205 aa).

The segment at M1–S40 is disordered. Over residues V8–S25 the composition is skewed to polar residues.

The protein belongs to the UNC119-binding protein family. In terms of assembly, interacts with unc119 family proteins; interaction preferentially takes place when unc119 proteins are unliganded with myristoylated proteins.

The protein localises to the cytoplasm. It localises to the cell projection. Its subcellular location is the cilium. Functionally, may play a role in immune regulation through regulation of the macrophage function. May also play a role in trafficking of proteins via its interaction with unc119 family cargo adapters. May play a role in ciliary membrane localization. The polypeptide is Macrophage immunometabolism regulator (macir) (Xenopus laevis (African clawed frog)).